Here is a 408-residue protein sequence, read N- to C-terminus: Aurora kinase A-B (408 aa).

Residues 1 to 10 (MERAVKENHK) show a composition bias toward basic and acidic residues. The interval 1-128 (MERAVKENHK…QGKTLAVPKE (128 aa)) is disordered. Residues 85–110 (GHQTSKPQGPNENRNPQQTSHSSTPN) show a composition bias toward polar residues. One can recognise a Protein kinase domain in the interval 140–390 (FEIGRPLGKG…LKGVLEHPWI (251 aa)). ATP contacts are provided by residues lysine 150, lysine 169, and 217–220 (LDYA). The active-site Proton acceptor is aspartate 263. Aspartate 281 serves as a coordination point for ATP. Residues 287 to 300 (HAPSSRRTTLCGTL) form an activation segment region.

It belongs to the protein kinase superfamily. Ser/Thr protein kinase family. Aurora subfamily. As to quaternary structure, interacts with kif2c and kif11. Post-translationally, phosphorylated. Autophosphorylated on a serine residue.

It localises to the cytoplasm. Its subcellular location is the cytoskeleton. The protein localises to the spindle pole. The protein resides in the microtubule organizing center. It is found in the centrosome. It carries out the reaction L-seryl-[protein] + ATP = O-phospho-L-seryl-[protein] + ADP + H(+). The catalysed reaction is L-threonyl-[protein] + ATP = O-phospho-L-threonyl-[protein] + ADP + H(+). In terms of biological role, mitotic serine/threonine kinases that contributes to the regulation of cell cycle progression. Associates with the centrosome and the spindle microtubules during mitosis and plays a critical role in various mitotic events including the establishment of mitotic spindle, centrosome duplication, centrosome separation as well as maturation, chromosomal alignment, spindle assembly checkpoint, and cytokinesis. Phosphorylates numerous target proteins. Important for microtubule formation and/or stabilization. This Xenopus laevis (African clawed frog) protein is Aurora kinase A-B (aurka-b).